Reading from the N-terminus, the 783-residue chain is Polyadenylate-binding protein, cytoplasmic and nuclear (783 aa).

Residues 16 to 65 (DLGNTSLGGGDNRAAPAINTNVAPGEYQTADPDTAGPTPSSAAPHPQSSA) are disordered. Residues 54–65 (PSSAAPHPQSSA) show a composition bias toward low complexity. RRM domains follow at residues 65–143 (ASLY…WSQR), 153–230 (GNVF…YHIP), 246–323 (TNIY…RAQK), and 349–471 (VNLY…LAQR). Disordered stretches follow at residues 381-428 (MRDA…KGDR), 596-671 (AAAL…AAGG), and 752-783 (VKSQ…EEKA). Residues 396–406 (GKDKENKKEGE) show a composition bias toward basic and acidic residues. The segment covering 407–416 (QAAEAEGEAE) has biased composition (acidic residues). Over residues 417–428 (GAEKKTEKKGDR) the composition is skewed to basic and acidic residues. The segment covering 601-614 (NGRGGPGGPGGRGM) has biased composition (gly residues). The segment covering 630–641 (AGFPPNGRPQNG) has biased composition (low complexity). The segment covering 642–655 (NMGGRGGPGRGGNF) has biased composition (gly residues). A compositionally biased stretch (low complexity) spans 656-671 (AAGRGAPPAGPLAAGG). A PABC domain is found at 676–753 (SSLLQSQLTA…AMAVYDEYVK (78 aa)). The span at 770-783 (EAEKPKEEKAEEKA) shows a compositional bias: basic and acidic residues.

Belongs to the polyadenylate-binding protein type-1 family.

The protein localises to the cytoplasm. Its subcellular location is the nucleus. Binds the poly(A) tail of mRNA. Appears to be an important mediator of the multiple roles of the poly(A) tail in mRNA biogenesis, stability and translation. In the nucleus, involved in both mRNA cleavage and polyadenylation. Is also required for efficient mRNA export to the cytoplasm. Acts in concert with a poly(A)-specific nuclease (PAN) to affect poly(A) tail shortening, which may occur concomitantly with either nucleocytoplasmic mRNA transport or translational initiation. In the cytoplasm, stimulates translation initiation and regulates mRNA decay through translation termination-coupled poly(A) shortening, probably mediated by PAN. This Chaetomium globosum (strain ATCC 6205 / CBS 148.51 / DSM 1962 / NBRC 6347 / NRRL 1970) (Soil fungus) protein is Polyadenylate-binding protein, cytoplasmic and nuclear (PAB1).